Here is a 696-residue protein sequence, read N- to C-terminus: MSEHHSDTRDDLDESKFVTFEGSPFQLYQPYPPSGDQPTAIATLVEGVEDGLSFQTLLGVTGSGKTYTMANTIARLGRPAIVFAPNKTLAAQLYAEFREFFPRNAVEYFVSYYDYYQPEAYVPQRDLFIEKDSSINEHIEQMRLSATKSLMERRDVVIVATVSAIYGIGNPSEYHQMILTLRTGDKIGQREVIARLIAMQYTRNEQDFQRGTFRVRGDTIDIFPAEHAEMAVRVELFDDEVDTLHLFDPLTGRVRQKIPRFTVYPSSHYVTPRETVMRAVETIKDELRERLEFFHRDGKLVEAQRLEQRTRFDLEMLQELGFCKGIENYSRHFSGAAPGEPPPTLVDYLPPDALMLLDESHVLIGQLNGMYNGDRARKENLVDYGFRLPSALDNRPLKFPEFERKMRQVVFVSATPADYEQRVSGQTAEQVVRPTGLVDPQIEVRPASTQVDDVLSEITERVKANERVLITVLTKRMAEQLTEFLADHGVKVRYLHSDIDTVERVEIIRDLRLGTFDVLVGINLLREGLDIPEVSLVAILDADKEGFLRAERSLIQTIGRAARNVNGKALLYADRITDSMRRAIDETERRRAKQIAYNEKMGITPRGVVKRIKDIIDGVYNADEARAELKEAQQRAKFEDMSEKQIAKEIKRLEKQMADYAKNLEFEKAAQTRDQLALLRERVFGANVGDHVSGGE.

The 388-residue stretch at 46 to 433 folds into the Helicase ATP-binding domain; the sequence is EGVEDGLSFQ…SGQTAEQVVR (388 aa). 59–66 contributes to the ATP binding site; that stretch reads GVTGSGKT. Positions 112–135 match the Beta-hairpin motif; that stretch reads YYDYYQPEAYVPQRDLFIEKDSSI. Residues 450-616 enclose the Helicase C-terminal domain; it reads QVDDVLSEIT…GVVKRIKDII (167 aa). A UVR domain is found at 647-682; the sequence is AKEIKRLEKQMADYAKNLEFEKAAQTRDQLALLRER.

The protein belongs to the UvrB family. Forms a heterotetramer with UvrA during the search for lesions. Interacts with UvrC in an incision complex.

It localises to the cytoplasm. Functionally, the UvrABC repair system catalyzes the recognition and processing of DNA lesions. A damage recognition complex composed of 2 UvrA and 2 UvrB subunits scans DNA for abnormalities. Upon binding of the UvrA(2)B(2) complex to a putative damaged site, the DNA wraps around one UvrB monomer. DNA wrap is dependent on ATP binding by UvrB and probably causes local melting of the DNA helix, facilitating insertion of UvrB beta-hairpin between the DNA strands. Then UvrB probes one DNA strand for the presence of a lesion. If a lesion is found the UvrA subunits dissociate and the UvrB-DNA preincision complex is formed. This complex is subsequently bound by UvrC and the second UvrB is released. If no lesion is found, the DNA wraps around the other UvrB subunit that will check the other stand for damage. The polypeptide is UvrABC system protein B (Burkholderia mallei (strain ATCC 23344)).